We begin with the raw amino-acid sequence, 154 residues long: Superoxide dismutase [Cu-Zn] (154 aa).

Residues H47, H49, and H64 each coordinate Cu cation. A disulfide bridge connects residues C58 and C147. Residues H64, H72, H81, and D84 each coordinate Zn(2+). H121 contributes to the Cu cation binding site. A substrate-binding site is contributed by R144.

It belongs to the Cu-Zn superoxide dismutase family. As to quaternary structure, homodimer. Cu cation is required as a cofactor. The cofactor is Zn(2+).

The protein resides in the cytoplasm. The catalysed reaction is 2 superoxide + 2 H(+) = H2O2 + O2. Destroys radicals which are normally produced within the cells and which are toxic to biological systems. This is Superoxide dismutase [Cu-Zn] (sod1) from Schizosaccharomyces pombe (strain 972 / ATCC 24843) (Fission yeast).